The following is a 156-amino-acid chain: Small ribosomal subunit protein uS7 (156 aa).

Belongs to the universal ribosomal protein uS7 family. In terms of assembly, part of the 30S ribosomal subunit. Contacts proteins S9 and S11.

In terms of biological role, one of the primary rRNA binding proteins, it binds directly to 16S rRNA where it nucleates assembly of the head domain of the 30S subunit. Is located at the subunit interface close to the decoding center, probably blocks exit of the E-site tRNA. This Streptococcus agalactiae serotype Ia (strain ATCC 27591 / A909 / CDC SS700) protein is Small ribosomal subunit protein uS7.